The following is a 448-amino-acid chain: Bifunctional protein GlmU (448 aa).

The tract at residues 1-232 (MSERSLLVVV…VDEVAGVNSR (232 aa)) is pyrophosphorylase. Residues 11-14 (LAAG), K25, Q78, and 83-84 (GT) each bind UDP-N-acetyl-alpha-D-glucosamine. Residue D108 coordinates Mg(2+). Residues G144, E158, N173, and N230 each contribute to the UDP-N-acetyl-alpha-D-glucosamine site. Residue N230 coordinates Mg(2+). Residues 233–253 (LQLAEAEAILQGRLRRAAMAG) form a linker region. The interval 254 to 448 (GATLVAPETV…LRAARGKPKV (195 aa)) is N-acetyltransferase. 2 residues coordinate UDP-N-acetyl-alpha-D-glucosamine: R319 and K337. H349 serves as the catalytic Proton acceptor. UDP-N-acetyl-alpha-D-glucosamine is bound by residues Y352 and N363. Acetyl-CoA is bound by residues A366, 372-373 (NY), S409, and R426.

This sequence in the N-terminal section; belongs to the N-acetylglucosamine-1-phosphate uridyltransferase family. It in the C-terminal section; belongs to the transferase hexapeptide repeat family. In terms of assembly, homotrimer. Mg(2+) is required as a cofactor.

It is found in the cytoplasm. The catalysed reaction is alpha-D-glucosamine 1-phosphate + acetyl-CoA = N-acetyl-alpha-D-glucosamine 1-phosphate + CoA + H(+). The enzyme catalyses N-acetyl-alpha-D-glucosamine 1-phosphate + UTP + H(+) = UDP-N-acetyl-alpha-D-glucosamine + diphosphate. It functions in the pathway nucleotide-sugar biosynthesis; UDP-N-acetyl-alpha-D-glucosamine biosynthesis; N-acetyl-alpha-D-glucosamine 1-phosphate from alpha-D-glucosamine 6-phosphate (route II): step 2/2. Its pathway is nucleotide-sugar biosynthesis; UDP-N-acetyl-alpha-D-glucosamine biosynthesis; UDP-N-acetyl-alpha-D-glucosamine from N-acetyl-alpha-D-glucosamine 1-phosphate: step 1/1. The protein operates within bacterial outer membrane biogenesis; LPS lipid A biosynthesis. Its function is as follows. Catalyzes the last two sequential reactions in the de novo biosynthetic pathway for UDP-N-acetylglucosamine (UDP-GlcNAc). The C-terminal domain catalyzes the transfer of acetyl group from acetyl coenzyme A to glucosamine-1-phosphate (GlcN-1-P) to produce N-acetylglucosamine-1-phosphate (GlcNAc-1-P), which is converted into UDP-GlcNAc by the transfer of uridine 5-monophosphate (from uridine 5-triphosphate), a reaction catalyzed by the N-terminal domain. The protein is Bifunctional protein GlmU of Azorhizobium caulinodans (strain ATCC 43989 / DSM 5975 / JCM 20966 / LMG 6465 / NBRC 14845 / NCIMB 13405 / ORS 571).